The sequence spans 440 residues: Chromosome partition protein MukF (440 aa).

Positions 208–236 (LSETSGTLRELQDTLEAAGDKLQANLLRI) are leucine-zipper.

This sequence belongs to the MukF family. Interacts, and probably forms a ternary complex, with MukE and MukB via its C-terminal region. The complex formation is stimulated by calcium or magnesium. It is required for an interaction between MukE and MukB.

It localises to the cytoplasm. The protein localises to the nucleoid. Involved in chromosome condensation, segregation and cell cycle progression. May participate in facilitating chromosome segregation by condensation DNA from both sides of a centrally located replisome during cell division. Not required for mini-F plasmid partitioning. Probably acts via its interaction with MukB and MukE. Overexpression results in anucleate cells. It has a calcium binding activity. In Salmonella paratyphi B (strain ATCC BAA-1250 / SPB7), this protein is Chromosome partition protein MukF.